The primary structure comprises 85 residues: UPF0291 protein SEQ_0545 (85 aa).

Residues 62–85 are disordered; it reads TPEKLRQVQREKGLHGRSLDDPES.

The protein belongs to the UPF0291 family.

The protein resides in the cytoplasm. This chain is UPF0291 protein SEQ_0545, found in Streptococcus equi subsp. equi (strain 4047).